The sequence spans 191 residues: uncharacterized protein (191 aa).

Residues 3–63 (IDRKKLILEA…EIFTTLLKEM (61 aa)) form the HTH tetR-type domain. Residues 26–45 (TMDLVAKLANVGKGTIYTFF) constitute a DNA-binding region (H-T-H motif).

This is an uncharacterized protein from Bacillus subtilis (strain 168).